Consider the following 186-residue polypeptide: Acireductone dioxygenase (186 aa).

Residues His96, His98, Glu102, and His140 each coordinate Fe(2+). The Ni(2+) site is built by His96, His98, Glu102, and His140.

This sequence belongs to the acireductone dioxygenase (ARD) family. As to quaternary structure, monomer. It depends on Fe(2+) as a cofactor. Requires Ni(2+) as cofactor.

The catalysed reaction is 1,2-dihydroxy-5-(methylsulfanyl)pent-1-en-3-one + O2 = 3-(methylsulfanyl)propanoate + CO + formate + 2 H(+). The enzyme catalyses 1,2-dihydroxy-5-(methylsulfanyl)pent-1-en-3-one + O2 = 4-methylsulfanyl-2-oxobutanoate + formate + 2 H(+). Its pathway is amino-acid biosynthesis; L-methionine biosynthesis via salvage pathway; L-methionine from S-methyl-5-thio-alpha-D-ribose 1-phosphate: step 5/6. Its function is as follows. Catalyzes 2 different reactions between oxygen and the acireductone 1,2-dihydroxy-3-keto-5-methylthiopentene (DHK-MTPene) depending upon the metal bound in the active site. Fe-containing acireductone dioxygenase (Fe-ARD) produces formate and 2-keto-4-methylthiobutyrate (KMTB), the alpha-ketoacid precursor of methionine in the methionine recycle pathway. Ni-containing acireductone dioxygenase (Ni-ARD) produces methylthiopropionate, carbon monoxide and formate, and does not lie on the methionine recycle pathway. The polypeptide is Acireductone dioxygenase (Methylococcus capsulatus (strain ATCC 33009 / NCIMB 11132 / Bath)).